Here is a 409-residue protein sequence, read N- to C-terminus: BRCA1-A complex subunit Abraxas 1 (409 aa).

Positions 7 to 160 (SAVLSGFVLG…HSLYKPQKGL (154 aa)) constitute an MPN domain. Serine 48 is modified (phosphoserine). Residues 206–260 (DGSLKEVHKINEMYASLQEELKSICKKVEDSEQAVDKLVKDVNRLKREIEKRRGA) adopt a coiled-coil conformation. Positions 362–372 (LLDTQDKRSKA) are enriched in basic and acidic residues. Residues 362–409 (LLDTQDKRSKADTGSSNQDKASKMSSPETDEEIEKMKGFGEYSRSPTF) are disordered. Polar residues predominate over residues 373-388 (DTGSSNQDKASKMSSP). A phosphoserine mark is found at serine 386 and serine 387. Threonine 390 bears the Phosphothreonine mark. 2 positions are modified to phosphoserine: serine 404 and serine 406. The pSXXF motif motif lies at 406-409 (SPTF).

Belongs to the FAM175 family. Abraxas subfamily. In terms of assembly, component of the ARISC complex, at least composed of UIMC1/RAP80, ABRAXAS1, BRCC3/BRCC36, BABAM2 and BABAM1/NBA1. Component of the BRCA1-A complex, at least composed of BRCA1, BARD1, UIMC1/RAP80, ABRAXAS1, BRCC3/BRCC36, BABAM2 and BABAM1/NBA1. In the complex, interacts directly with UIMC1/RAP80, BRCC3/BRCC36 and BABAM2. Interacts directly (when phosphorylated at Ser-406) with BRCA1. Homodimer. The homodimer interacts directly (when phosphorylated at Ser-404 and Ser-406) with two BRCA1 chains, giving rise to a heterotetramer. Binds polyubiquitin. In terms of processing, phosphorylation of Ser-406 of the pSXXF motif by ATM or ATR constitutes a specific recognition motif for the BRCT domain of BRCA1. Ionizing radiation promotes rapid phosphorylation at Ser-404 and Ser-406 by ATM; this promotes recruitment of BRCA1 to sites of DNA damage.

The protein resides in the nucleus. Involved in DNA damage response and double-strand break (DSB) repair. Component of the BRCA1-A complex, acting as a central scaffold protein that assembles the various components of the complex and mediates the recruitment of BRCA1. The BRCA1-A complex specifically recognizes 'Lys-63'-linked ubiquitinated histones H2A and H2AX at DNA lesion sites, leading to target the BRCA1-BARD1 heterodimer to sites of DNA damage at DSBs. This complex also possesses deubiquitinase activity that specifically removes 'Lys-63'-linked ubiquitin on histones H2A and H2AX. This is BRCA1-A complex subunit Abraxas 1 from Homo sapiens (Human).